A 212-amino-acid chain; its full sequence is Histone H1.2 (212 aa).

The span at 1–17 (MSEAAPAAPAAAPPAEK) shows a compositional bias: low complexity. Residues 1–41 (MSEAAPAAPAAAPPAEKAPAKKKAAKKPAGVRRKASGPPVS) are disordered. Ser-2 carries the N-acetylserine modification. Ser-2 carries the phosphoserine modification. At Lys-17 the chain carries N6-acetyllysine. Positions 20-35 (AKKKAAKKPAGVRRKA) are enriched in basic residues. Lys-23, Lys-26, and Lys-27 each carry N6-(2-hydroxyisobutyryl)lysine. N6-(beta-hydroxybutyryl)lysine; alternate is present on Lys-34. The residue at position 34 (Lys-34) is an N6-crotonyllysine; alternate. An N6-methyllysine; alternate modification is found at Lys-34. Positions 36–109 (SGPPVSELIT…GASGSFKLNK (74 aa)) constitute an H15 domain. N6-(2-hydroxyisobutyryl)lysine is present on Lys-46. Lys-52 is subject to N6-(beta-hydroxybutyryl)lysine; alternate. Residue Lys-52 is modified to N6-(2-hydroxyisobutyryl)lysine; alternate. Arg-54 is subject to Citrulline. N6-(2-hydroxyisobutyryl)lysine is present on Lys-63. An N6-(beta-hydroxybutyryl)lysine; alternate modification is found at Lys-64. Residue Lys-64 is modified to N6-crotonyllysine; alternate. Residue Lys-64 is modified to N6-(2-hydroxyisobutyryl)lysine; alternate. An N6-(2-hydroxyisobutyryl)lysine mark is found at Lys-75 and Lys-81. N6-(beta-hydroxybutyryl)lysine; alternate occurs at positions 85 and 90. N6-crotonyllysine; alternate occurs at positions 85, 90, and 97. Residues Lys-85, Lys-90, and Lys-97 each carry the N6-(2-hydroxyisobutyryl)lysine; alternate modification. An N6-succinyllysine; alternate modification is found at Lys-97. Positions 98–212 (GTGASGSFKL…KAKKVAAKKK (115 aa)) are disordered. The residue at position 104 (Ser-104) is a Phosphoserine; by PKC. Lys-106 bears the N6-(beta-hydroxybutyryl)lysine mark. 5 positions are modified to N6-(2-hydroxyisobutyryl)lysine: Lys-110, Lys-117, Lys-121, Lys-129, and Lys-136. Low complexity predominate over residues 121–148 (KKAGAAKAKKPAGAAKKPKKATGAATPK). A Phosphothreonine modification is found at Thr-146. Lys-148 bears the N6-(2-hydroxyisobutyryl)lysine mark. Over residues 149 to 160 (KAAKKTPKKAKK) the composition is skewed to basic residues. 2 positions are modified to N6-crotonyllysine; alternate: Lys-159 and Lys-168. Residues Lys-159 and Lys-168 each carry the N6-(2-hydroxyisobutyryl)lysine; alternate modification. Residues 169–212 (KVAKSPKKAKVTKPKKVKSASKAVKPKAAKPKVAKAKKVAAKKK) show a composition bias toward basic residues. Lys-186 carries the post-translational modification N6-methyllysine; by EHMT1 and EHMT2. The residue at position 187 (Ser-187) is an ADP-ribosylserine. Residue Lys-212 is modified to N6-(2-hydroxyisobutyryl)lysine.

The protein belongs to the histone H1/H5 family. In terms of assembly, interacts with TSC22D1 isoform 2. In terms of processing, H1 histones are progressively phosphorylated during the cell cycle, becoming maximally phosphorylated during late G2 phase and M phase, and being dephosphorylated sharply thereafter. Crotonylation (Kcr) is specifically present in male germ cells and marks testis-specific genes in post-meiotic cells, including X-linked genes that escape sex chromosome inactivation in haploid cells. Crotonylation marks active promoters and enhancers and confers resistance to transcriptional repressors. It is also associated with post-meiotically activated genes on autosomes. Post-translationally, ADP-ribosylated on Ser-187 in response to DNA damage. In terms of processing, citrullination at Arg-54 (H1R54ci) by PADI4 takes place within the DNA-binding site of H1 and results in its displacement from chromatin and global chromatin decondensation, thereby promoting pluripotency and stem cell maintenance. Hydroxybutyrylation of histones is induced by starvation.

The protein resides in the nucleus. The protein localises to the chromosome. Its function is as follows. Histone H1 protein binds to linker DNA between nucleosomes forming the macromolecular structure known as the chromatin fiber. Histones H1 are necessary for the condensation of nucleosome chains into higher-order structured fibers. Also acts as a regulator of individual gene transcription through chromatin remodeling, nucleosome spacing and DNA methylation. This is Histone H1.2 from Mus musculus (Mouse).